Here is a 292-residue protein sequence, read N- to C-terminus: RNA 5'-monophosphate methyltransferase (292 aa).

Residues 1 to 22 (MAASTEQATGGVEKTAAEEKPR) are disordered. Residues arginine 46, asparagine 76, aspartate 110, 135–136 (DF), and methionine 164 contribute to the S-adenosyl-L-methionine site. In terms of domain architecture, Bin3-type SAM spans 53–274 (ELLRRLFPQS…KQATETHPIP (222 aa)).

The protein belongs to the methyltransferase superfamily. Interacts with DICER1; the interaction may be mediated by RNA.

It is found in the cytoplasm. It catalyses the reaction a 5'-end 5'-phospho-ribonucleoside-RNA + S-adenosyl-L-methionine = a 5'-end (5'-methylphospho)-ribonucleoside-RNA + S-adenosyl-L-homocysteine. It carries out the reaction a 5'-end 5'-phospho-ribonucleoside-RNA + 2 S-adenosyl-L-methionine = a 5'-end (5'-bismethylphospho)-ribonucleoside-RNA + 2 S-adenosyl-L-homocysteine. O-methyltransferase that specifically monomethylates 5'-monophosphate of cytoplasmic histidyl tRNA (tRNA(His)), acting as a capping enzyme by protecting tRNA(His) from cleavage by DICER1. Also able, with less efficiently, to methylate the 5' monophosphate of a subset of pre-miRNAs, acting as a negative regulator of miRNA processing. The 5' monophosphate of pre-miRNAs is recognized by DICER1 and is required for pre-miRNAs processing: methylation at this position reduces the processing of pre-miRNAs by DICER1. Was also reported to mediate dimethylation of pre-miR-145; however dimethylation cannot be reproduced by another group which observes a monomethylation of pre-miR-145. This Bos taurus (Bovine) protein is RNA 5'-monophosphate methyltransferase (BCDIN3D).